The following is a 114-amino-acid chain: Hemerythrin subunit 2 (114 aa).

Fe cation is bound by residues His-26, His-55, Glu-59, His-74, His-78, His-102, and Asp-107.

The protein belongs to the hemerythrin family.

Hemerythrin is a respiratory protein in blood cells of certain marine worms. The oxygen-binding site in each chain contains two iron atoms. The protein is Hemerythrin subunit 2 of Golfingia vulgaris (Marine worm).